A 283-amino-acid polypeptide reads, in one-letter code: Bifunctional protein FolD (283 aa).

Residues 164 to 166 (GRS), Ser-189, and Ile-230 contribute to the NADP(+) site.

The protein belongs to the tetrahydrofolate dehydrogenase/cyclohydrolase family. As to quaternary structure, homodimer.

It catalyses the reaction (6R)-5,10-methylene-5,6,7,8-tetrahydrofolate + NADP(+) = (6R)-5,10-methenyltetrahydrofolate + NADPH. It carries out the reaction (6R)-5,10-methenyltetrahydrofolate + H2O = (6R)-10-formyltetrahydrofolate + H(+). Its pathway is one-carbon metabolism; tetrahydrofolate interconversion. Catalyzes the oxidation of 5,10-methylenetetrahydrofolate to 5,10-methenyltetrahydrofolate and then the hydrolysis of 5,10-methenyltetrahydrofolate to 10-formyltetrahydrofolate. The protein is Bifunctional protein FolD of Lactobacillus delbrueckii subsp. bulgaricus (strain ATCC 11842 / DSM 20081 / BCRC 10696 / JCM 1002 / NBRC 13953 / NCIMB 11778 / NCTC 12712 / WDCM 00102 / Lb 14).